The primary structure comprises 248 residues: 23S rRNA (guanosine-2'-O-)-methyltransferase RlmB (248 aa).

S-adenosyl-L-methionine contacts are provided by G200, I220, and L229.

This sequence belongs to the class IV-like SAM-binding methyltransferase superfamily. RNA methyltransferase TrmH family. RlmB subfamily.

Its subcellular location is the cytoplasm. It catalyses the reaction guanosine(2251) in 23S rRNA + S-adenosyl-L-methionine = 2'-O-methylguanosine(2251) in 23S rRNA + S-adenosyl-L-homocysteine + H(+). In terms of biological role, specifically methylates the ribose of guanosine 2251 in 23S rRNA. The protein is 23S rRNA (guanosine-2'-O-)-methyltransferase RlmB of Acinetobacter baylyi (strain ATCC 33305 / BD413 / ADP1).